The chain runs to 103 residues: Phosphoribosyl-ATP pyrophosphatase (103 aa).

It belongs to the PRA-PH family.

The protein resides in the cytoplasm. It carries out the reaction 1-(5-phospho-beta-D-ribosyl)-ATP + H2O = 1-(5-phospho-beta-D-ribosyl)-5'-AMP + diphosphate + H(+). It functions in the pathway amino-acid biosynthesis; L-histidine biosynthesis; L-histidine from 5-phospho-alpha-D-ribose 1-diphosphate: step 2/9. This Listeria monocytogenes serotype 4a (strain HCC23) protein is Phosphoribosyl-ATP pyrophosphatase.